We begin with the raw amino-acid sequence, 151 residues long: FUN14 domain-containing protein 2 (151 aa).

Topologically, residues 1–42 (MAANSQGNFDGKFEALDLAELTKKQPWWRKLFGQESGPSAEK) are cytoplasmic. A helical transmembrane segment spans residues 43–63 (YSVATQLVIGGVTGWCTGFVF). Residues 64–69 (QKVGKL) lie on the Mitochondrial intermembrane side of the membrane. Residues 70–90 (AATAVGGGFFLLQLANHTGYI) traverse the membrane as a helical segment. The Cytoplasmic portion of the chain corresponds to 91-126 (KVDWQRVEKDMKKAKEQLKIRKNKQIPTEVKSKAEE). A helical membrane pass occupies residues 127–147 (VVSFVKKNVLVTGGFFGGFLL). Residues 148-151 (GMAS) lie on the Mitochondrial intermembrane side of the membrane.

This sequence belongs to the FUN14 family. Highly expressed in platelet (at protein level). Expressed in liver, brain, heart and muscle.

The protein resides in the mitochondrion outer membrane. It localises to the nucleus. Functionally, binds directly and specifically 1,2-Diacyl-sn-glycero-3-phospho-(1'-myo-inositol-3',4',5'-bisphosphate) (PIP3) leading to the recruitment of PIP3 to mitochondria and may play a role in the regulation of the platelet activation via AKT/GSK3B/cGMP signaling pathways. May act as transcription factor that regulates SREBP1 (isoform SREBP-1C) expression in order to modulate triglyceride (TG) homeostasis in hepatocytes. The chain is FUN14 domain-containing protein 2 from Mus musculus (Mouse).